The sequence spans 287 residues: tRNA uridine(34) hydroxylase (287 aa).

Positions Q132–Y226 constitute a Rhodanese domain. The active-site Cysteine persulfide intermediate is C186.

It belongs to the TrhO family.

The catalysed reaction is uridine(34) in tRNA + AH2 + O2 = 5-hydroxyuridine(34) in tRNA + A + H2O. Catalyzes oxygen-dependent 5-hydroxyuridine (ho5U) modification at position 34 in tRNAs. This Paraburkholderia phytofirmans (strain DSM 17436 / LMG 22146 / PsJN) (Burkholderia phytofirmans) protein is tRNA uridine(34) hydroxylase.